Here is a 1184-residue protein sequence, read N- to C-terminus: Non-receptor tyrosine-protein kinase TYK2 (1184 aa).

The region spanning 33 to 430 (LMVLLHWPGP…GYFRLTADSS (398 aa)) is the FERM domain. Residues 294-368 (CYIQNSGQTA…KAGEHLTESP (75 aa)) form a disordered region. At Tyr-295 the chain carries Phosphotyrosine. The 81-residue stretch at 449-529 (GIHGPLMDPF…GRSFASLGDL (81 aa)) folds into the SH2; atypical domain. Position 525 is a phosphoserine (Ser-525). In terms of domain architecture, Protein kinase 1 spans 589 to 866 (ITQLSHLGQG…RTILRDLTRL (278 aa)). The residue at position 604 (Tyr-604) is a Phosphotyrosine. Position 881 is a phosphoserine (Ser-881). In terms of domain architecture, Protein kinase 2 spans 894 to 1166 (LKKIRDLGEG…PTFQNLVPIL (273 aa)). ATP contacts are provided by residues 900-908 (LGEGHFGKV) and Lys-927. The active-site Proton acceptor is Asp-1020. Phosphotyrosine; by autocatalysis is present on Tyr-1051. Residue Tyr-1052 is modified to Phosphotyrosine.

Belongs to the protein kinase superfamily. Tyr protein kinase family. JAK subfamily. Interacts (via FERM domain) with JAKMIP1. Interacts with PIK3R1; this interaction is important for cell migration. Interacts with MPL/TPOR. Phosphorylation by JAK1 at Tyr-1051 and Tyr-1052 induces kinase activation.

The catalysed reaction is L-tyrosyl-[protein] + ATP = O-phospho-L-tyrosyl-[protein] + ADP + H(+). With respect to regulation, the protein kinase 1 domain (also termed pseudokinase domain) mediates autoinhibition of the TYK2 kinase domain. Tyrosine kinase of the non-receptor type involved in numerous cytokines and interferons signaling, which regulates cell growth, development, cell migration, innate and adaptive immunity. Plays both structural and catalytic roles in numerous interleukins and interferons (IFN-alpha/beta) signaling. Associates with heterodimeric cytokine receptor complexes and activates STAT family members including STAT1, STAT3, STAT4 or STAT6. The heterodimeric cytokine receptor complexes are composed of (1) a TYK2-associated receptor chain (IFNAR1, IL12RB1, IL10RB or IL13RA1), and (2) a second receptor chain associated either with JAK1 or JAK2. In response to cytokine-binding to receptors, phosphorylates and activates receptors (IFNAR1, IL12RB1, IL10RB or IL13RA1), creating docking sites for STAT members. In turn, recruited STATs are phosphorylated by TYK2 (or JAK1/JAK2 on the second receptor chain), form homo- and heterodimers, translocate to the nucleus, and regulate cytokine/growth factor responsive genes. Negatively regulates STAT3 activity by promototing phosphorylation at a specific tyrosine that differs from the site used for signaling. The chain is Non-receptor tyrosine-protein kinase TYK2 from Mus musculus (Mouse).